The sequence spans 140 residues: Ribonuclease P protein subunit p20 (140 aa).

The protein belongs to the histone-like Alba family. Component of nuclear RNase P and RNase MRP complexes. RNase P consists of a catalytic RNA moiety and 10 different protein chains; POP1, POP4, POP5, POP7, RPP14, RPP21, RPP25, RPP30, RPP38 and RPP40. Within the RNase P complex, POP1, POP7 and RPP25 form the 'finger' subcomplex, POP5, RPP14, RPP40 and homodimeric RPP30 form the 'palm' subcomplex, and RPP21, POP4 and RPP38 form the 'wrist' subcomplex. All subunits of the RNase P complex interact with the catalytic RNA. Several subunits of RNase P are also part of the RNase MRP complex. RNase MRP consists of a catalytic RNA moiety and about 8 protein subunits; POP1, POP7, RPP25, RPP30, RPP38, RPP40 and possibly also POP4 and POP5. Interacts with SMN1. POP7 forms a heterodimer with RPP25 that binds to the P3 stem loop of the catalytic RNA.

The protein resides in the nucleus. It is found in the nucleolus. The protein localises to the cytoplasm. It localises to the cytoplasmic granule. Functionally, component of ribonuclease P, a ribonucleoprotein complex that generates mature tRNA molecules by cleaving their 5'-ends. Also a component of the MRP ribonuclease complex, which cleaves pre-rRNA sequences. This chain is Ribonuclease P protein subunit p20 (POP7), found in Bos taurus (Bovine).